A 93-amino-acid polypeptide reads, in one-letter code: Small ribosomal subunit protein uS19 (93 aa).

This sequence belongs to the universal ribosomal protein uS19 family.

Functionally, protein S19 forms a complex with S13 that binds strongly to the 16S ribosomal RNA. The polypeptide is Small ribosomal subunit protein uS19 (Clostridioides difficile (strain 630) (Peptoclostridium difficile)).